Consider the following 1031-residue polypeptide: Protein translocase subunit SecA (1031 aa).

ATP is bound by residues Gln-143, 161–165, and Asp-661; that span reads GEGKT. Residues 963–973 are compositionally biased toward basic and acidic residues; that stretch reads KERLVAKHEES. Positions 963-1031 are disordered; sequence KERLVAKHEE…GKKYKNCCGR (69 aa). Zn(2+)-binding residues include Cys-1017, Cys-1019, Cys-1028, and Cys-1029.

It belongs to the SecA family. In terms of assembly, monomer and homodimer. Part of the essential Sec protein translocation apparatus which comprises SecA, SecYEG and auxiliary proteins SecDF. Other proteins may also be involved. Requires Zn(2+) as cofactor.

It is found in the cell inner membrane. Its subcellular location is the cytoplasm. The catalysed reaction is ATP + H2O + cellular proteinSide 1 = ADP + phosphate + cellular proteinSide 2.. Its function is as follows. Part of the Sec protein translocase complex. Interacts with the SecYEG preprotein conducting channel. Has a central role in coupling the hydrolysis of ATP to the transfer of proteins into and across the cell membrane, serving as an ATP-driven molecular motor driving the stepwise translocation of polypeptide chains across the membrane. The protein is Protein translocase subunit SecA of Prosthecochloris aestuarii (strain DSM 271 / SK 413).